Reading from the N-terminus, the 265-residue chain is Homeobox protein CDX-1 (265 aa).

Positions 9–152 (KDSPVYPGPA…GGGGVSGKTR (144 aa)) are disordered. Over residues 30 to 43 (YGPPAPPPAPPQYP) the composition is skewed to pro residues. Over residues 73–92 (AAAYGPGPAAPAASPASLAF) the composition is skewed to low complexity. A compositionally biased stretch (pro residues) spans 93-108 (GPPPDFSPVPAPPGPG). Low complexity predominate over residues 110 to 126 (GLLAQPLGGPGTPSSPG). Positions 154 to 213 (KDKYRVVYTDHQRLELEKEFHYSRYITIRRKSELAANLGLTERQVKIWFQNRRAKERKVN) form a DNA-binding region, homeobox. Positions 157 to 178 (YRVVYTDHQRLELEKEFHYSRY) are interaction with DNA. The interaction with 5-mCpG DNA stretch occupies residues 196-207 (RQVKIWFQNRRA). Positions 206 to 217 (RAKERKVNKKKQ) are enriched in basic residues. Residues 206–265 (RAKERKVNKKKQQQQQPPQPPTAHDITATPARPSLGGLCPSNTSLLATSSPMPVKEEFLP) form a disordered region. A compositionally biased stretch (polar residues) spans 245-256 (PSNTSLLATSSP).

It belongs to the Caudal homeobox family.

Its subcellular location is the nucleus. Plays a role in transcriptional regulation. Involved in activated KRAS-mediated transcriptional activation of PRKD1 in colorectal cancer (CRC) cells. Binds to the PRKD1 promoter in colorectal cancer (CRC) cells. Could play a role in the terminal differentiation of the intestine. Binds preferentially to methylated DNA. This is Homeobox protein CDX-1 (CDX1) from Pongo pygmaeus (Bornean orangutan).